The sequence spans 408 residues: Imidazolonepropionase (408 aa).

His-73 and His-75 together coordinate Fe(3+). Residues His-73 and His-75 each coordinate Zn(2+). The 4-imidazolone-5-propanoate site is built by Arg-82, Tyr-145, and His-178. Tyr-145 contributes to the N-formimidoyl-L-glutamate binding site. His-243 contributes to the Fe(3+) binding site. Zn(2+) is bound at residue His-243. Gln-246 lines the 4-imidazolone-5-propanoate pocket. Asp-318 is a binding site for Fe(3+). Asp-318 contributes to the Zn(2+) binding site. N-formimidoyl-L-glutamate contacts are provided by Asn-320 and Gly-322. Ser-323 is a 4-imidazolone-5-propanoate binding site.

Belongs to the metallo-dependent hydrolases superfamily. HutI family. It depends on Zn(2+) as a cofactor. The cofactor is Fe(3+).

The protein resides in the cytoplasm. It catalyses the reaction 4-imidazolone-5-propanoate + H2O = N-formimidoyl-L-glutamate. It functions in the pathway amino-acid degradation; L-histidine degradation into L-glutamate; N-formimidoyl-L-glutamate from L-histidine: step 3/3. In terms of biological role, catalyzes the hydrolytic cleavage of the carbon-nitrogen bond in imidazolone-5-propanoate to yield N-formimidoyl-L-glutamate. It is the third step in the universal histidine degradation pathway. This is Imidazolonepropionase from Shewanella baltica (strain OS185).